The following is a 90-amino-acid chain: Bombyxin B-3 (90 aa).

The signal sequence occupies residues 1–20 (MMKTTIMFMLVVVISLTYSS). 3 disulfides stabilise this stretch: Cys-30-Cys-76, Cys-42-Cys-89, and Cys-75-Cys-80. Residues 49 to 67 (SGAQYAPYFWTRQYLGSRG) constitute a propeptide, c peptide like.

Belongs to the insulin family. In terms of assembly, heterodimer of a B chain and an A chain linked by two disulfide bonds.

The protein resides in the secreted. Its function is as follows. Brain peptide responsible for activation of prothoracic glands to produce ecdysone in insects. This is Bombyxin B-3 (BBXB3) from Bombyx mori (Silk moth).